Consider the following 690-residue polypeptide: Elongation factor G (690 aa).

The 276-residue stretch at 8–283 (EDYRNFGIMA…AVVDYLPSPI (276 aa)) folds into the tr-type G domain. GTP-binding positions include 17-24 (AHIDAGKT), 81-85 (DTPGH), and 135-138 (NKMD).

Belongs to the TRAFAC class translation factor GTPase superfamily. Classic translation factor GTPase family. EF-G/EF-2 subfamily.

It localises to the cytoplasm. Catalyzes the GTP-dependent ribosomal translocation step during translation elongation. During this step, the ribosome changes from the pre-translocational (PRE) to the post-translocational (POST) state as the newly formed A-site-bound peptidyl-tRNA and P-site-bound deacylated tRNA move to the P and E sites, respectively. Catalyzes the coordinated movement of the two tRNA molecules, the mRNA and conformational changes in the ribosome. This is Elongation factor G from Bradyrhizobium diazoefficiens (strain JCM 10833 / BCRC 13528 / IAM 13628 / NBRC 14792 / USDA 110).